The sequence spans 728 residues: NF-kappa-B inhibitor zeta (728 aa).

The interval 45–107 (GAGDTGYLSA…PHMGVGRQQR (63 aa)) is disordered. A compositionally biased stretch (low complexity) spans 53 to 82 (SAVPSAPGSPGSDSSDFSSTSSVSSCGAVE). Residues 83 to 96 (SRPRGGARAERPQV) show a composition bias toward basic and acidic residues. Residues 107–129 (RGPFQGVRVKNSVKELLLHIRSN) enclose the OCA domain. The short motif at 163-178 (KRKGPDPLSDGPVCKR) is the Nuclear localization signal element. 2 stretches are compositionally biased toward polar residues: residues 241-250 (PTVPQNSPRD) and 268-288 (QPFQ…YQYS). The disordered stretch occupies residues 241 to 334 (PTVPQNSPRD…SQSPKYDSNL (94 aa)). Over residues 303-315 (QQQHQQNYPHNSP) the composition is skewed to low complexity. Over residues 316-330 (LQFSPYSRMSQSPKY) the composition is skewed to polar residues. Residues 329 to 403 (KYDSNLFDTH…VGVHDVGSHS (75 aa)) are required for transcriptional activity. Positions 414-728 (MGSPMNTTQL…KSIQQRAPPY (315 aa)) are interaction with NFKB1/p50. 7 ANK repeats span residues 453-482 (DGDT…ALHM), 489-518 (NGQS…QVNT), 522-551 (WGRT…RSNQ), 561-589 (DGLT…SHSP), 591-617 (VQDL…AVEA), 622-651 (SGRT…CLSF), and 658-691 (NGNT…DPST).

As to quaternary structure, interacts with NFKB1/p50. Interacts with RELA. Interacts with AKIRIN2. In terms of tissue distribution, expressed in kidney, liver, lung and heart. Expressed at very low levels in skeletal muscle, spleen and brain.

It localises to the nucleus. Its function is as follows. Involved in regulation of NF-kappa-B transcription factor complexes. Inhibits NF-kappa-B activity without affecting its nuclear translocation upon stimulation. Inhibits DNA-binding of RELA and NFKB1/p50, and of the NF-kappa-B p65-p50 heterodimer and the NF-kappa-B p50-p50 homodimer. Also seems to activate NF-kappa-B-mediated transcription. In vitro, upon association with NFKB1/p50 has transcriptional activation activity and, together with NFKB1/p50 and RELA, is recruited to LCN2 promoters. Promotes transcription of LCN2 and DEFB4. Is recruited to IL-6 promoters and activates IL-6 but decreases TNF-alpha production in response to LPS. Seems to be involved in the induction of inflammatory genes activated through TLR/IL-1 receptor signaling. Involved in the induction of T helper 17 cells (Th17) differentiation upon recognition of antigen by T cell antigen receptor (TCR). This Mus musculus (Mouse) protein is NF-kappa-B inhibitor zeta (Nfkbiz).